Here is a 456-residue protein sequence, read N- to C-terminus: Peptide chain release factor PrfB1, chloroplastic (456 aa).

The transit peptide at 1–58 directs the protein to the chloroplast; sequence MSMELTVLGPLAGRSFAIAGKPKLLLLRPTNLPLLRLSLPLSLPNFSSSSRFNSPIVF.

This sequence belongs to the prokaryotic/mitochondrial release factor family. Expressed in leaves, stems and flowers.

Its subcellular location is the plastid. The protein localises to the chloroplast stroma. Its function is as follows. Directs the termination of translation in response to the peptide chain termination codon UGA. Required for the proper translation, stability and normal processing of UGA-containing polycistronic transcripts in chloroplasts. This Arabidopsis thaliana (Mouse-ear cress) protein is Peptide chain release factor PrfB1, chloroplastic.